The following is a 27-amino-acid chain: Small ribosomal subunit protein bTHX (27 aa).

Positions 1-13 (MGKGDRRTRRGKI) are enriched in basic residues. A disordered region spans residues 1–27 (MGKGDRRTRRGKIWRGTYGKYRPRKKK).

It belongs to the bacterial ribosomal protein bTHX family. Part of the 30S ribosomal subunit.

In terms of biological role, binds at the top of the head of the 30S subunit. It stabilizes a number of different RNA elements and thus is important for subunit structure. The sequence is that of Small ribosomal subunit protein bTHX (rpsU) from Thermus aquaticus.